A 293-amino-acid chain; its full sequence is Protease HtpX (293 aa).

2 helical membrane passes run 4 to 24 (IALFLITNLAVMLVFGLVLSL) and 34 to 54 (GLMIMAGLFGFGGAFVSLLMS). Residue His-139 coordinates Zn(2+). Glu-140 is an active-site residue. Position 143 (His-143) interacts with Zn(2+). Helical transmembrane passes span 158–178 (IVNTFVIFISRLIAQVVSGFL) and 193–213 (MVYFAVATVLELVFGILASII). Zn(2+) is bound at residue Glu-222.

Belongs to the peptidase M48B family. It depends on Zn(2+) as a cofactor.

The protein resides in the cell inner membrane. This chain is Protease HtpX, found in Pectobacterium atrosepticum (strain SCRI 1043 / ATCC BAA-672) (Erwinia carotovora subsp. atroseptica).